Here is a 341-residue protein sequence, read N- to C-terminus: Glucokinase (341 aa).

18 to 23 is a binding site for ATP; that stretch reads GDIGGT.

It belongs to the bacterial glucokinase family.

Its subcellular location is the cytoplasm. The enzyme catalyses D-glucose + ATP = D-glucose 6-phosphate + ADP + H(+). The sequence is that of Glucokinase from Mesorhizobium japonicum (strain LMG 29417 / CECT 9101 / MAFF 303099) (Mesorhizobium loti (strain MAFF 303099)).